The primary structure comprises 143 residues: Small ribosomal subunit protein eS19x (143 aa).

It belongs to the eukaryotic ribosomal protein eS19 family.

The protein is Small ribosomal subunit protein eS19x (RPS19C) of Arabidopsis thaliana (Mouse-ear cress).